A 243-amino-acid chain; its full sequence is F-box protein pof15 (243 aa).

Residues 28–73 (QTSSTLLPVEVIDSVMQYLPAHDVIQSSFASYPLTLIANKIIRARL) form the F-box domain.

It participates in protein modification; protein ubiquitination. Its function is as follows. Probable substrate recognition component of a SCF (SKP1-CUL1-F-box protein) E3 ubiquitin-protein ligase complex that mediates the ubiquitination and subsequent proteasomal degradation of target proteins. This Schizosaccharomyces pombe (strain 972 / ATCC 24843) (Fission yeast) protein is F-box protein pof15 (pof15).